A 48-amino-acid chain; its full sequence is Large ribosomal subunit protein bL33B (48 aa).

This sequence belongs to the bacterial ribosomal protein bL33 family.

The polypeptide is Large ribosomal subunit protein bL33B (Streptococcus thermophilus (strain CNRZ 1066)).